Reading from the N-terminus, the 26-residue chain is Maculatin-3.1 (26 aa).

Ala-26 carries the post-translational modification Alanine amide.

Expressed by the skin dorsal glands.

The protein localises to the secreted. Shows antibacterial activity against S.uberis. The chain is Maculatin-3.1 from Ranoidea genimaculata (Brown-spotted tree frog).